The following is a 453-amino-acid chain: Phenylalanine-4-hydroxylase (453 aa).

A2 carries the N-acetylalanine modification. S16 is modified (phosphoserine; by PKA). Residues 36–114 (SLIFSLKEEV…TVHELSRDKE (79 aa)) form the ACT domain. 3 residues coordinate Fe cation: H285, H290, and E330.

This sequence belongs to the biopterin-dependent aromatic amino acid hydroxylase family. Homodimer and homotetramer. Fe(2+) is required as a cofactor. Phosphorylation at Ser-16 increases basal activity and facilitates activation by the substrate phenylalanine.

It carries out the reaction (6R)-L-erythro-5,6,7,8-tetrahydrobiopterin + L-phenylalanine + O2 = (4aS,6R)-4a-hydroxy-L-erythro-5,6,7,8-tetrahydrobiopterin + L-tyrosine. It functions in the pathway amino-acid degradation; L-phenylalanine degradation; acetoacetate and fumarate from L-phenylalanine: step 1/6. With respect to regulation, N-terminal region of PAH is thought to contain allosteric binding sites for phenylalanine and to constitute an 'inhibitory' domain that regulates the activity of a catalytic domain in the C-terminal portion of the molecule. In terms of biological role, catalyzes the hydroxylation of L-phenylalanine to L-tyrosine. This chain is Phenylalanine-4-hydroxylase (Pah), found in Rattus norvegicus (Rat).